The primary structure comprises 329 residues: Probable cell division protein WhiA (329 aa).

Residues 276–309 (SLEELGKVHEPPLTKDAIAGRIRRLLALADKTAR) constitute a DNA-binding region (H-T-H motif). The segment at 308 to 329 (ARSNGEPTTLESLPVEMRDDRG) is disordered. The segment covering 309–318 (RSNGEPTTLE) has biased composition (polar residues).

This sequence belongs to the WhiA family.

In terms of biological role, involved in cell division and chromosome segregation. This is Probable cell division protein WhiA from Cutibacterium acnes (strain DSM 16379 / KPA171202) (Propionibacterium acnes).